A 258-amino-acid chain; its full sequence is UPF0246 protein VV0659 (258 aa).

It belongs to the UPF0246 family.

The sequence is that of UPF0246 protein VV0659 from Vibrio vulnificus (strain YJ016).